The primary structure comprises 152 residues: MINMDKTLSVIVFLISLIIIFGIYFSSSNFSFKKVEINKSTINDFGDENILTFVPEVCDRFYYEKDGFDWERNINNIETVIIGSDAVVIEKGDFNETEILKELIENGYSVESCRGVYYYKNEKALSDRYIIVGNNLIIKANDISGIRWRYLQ.

The chain crosses the membrane as a helical span at residues 7–27 (TLSVIVFLISLIIIFGIYFSS).

It localises to the membrane. This is an uncharacterized protein from Methanocaldococcus jannaschii (strain ATCC 43067 / DSM 2661 / JAL-1 / JCM 10045 / NBRC 100440) (Methanococcus jannaschii).